The chain runs to 499 residues: Probable UTP--glucose-1-phosphate uridylyltransferase (499 aa).

Residues 108–111 (LNGG), K122, Q185, and G214 contribute to the UTP site. 110 to 111 (GG) serves as a coordination point for substrate. Substrate contacts are provided by residues H215 and 243-245 (NID). UTP-binding residues include D245 and K387.

Belongs to the UDPGP type 1 family.

The protein resides in the cytoplasm. The protein localises to the nucleus. The enzyme catalyses alpha-D-glucose 1-phosphate + UTP + H(+) = UDP-alpha-D-glucose + diphosphate. Functionally, plays a central role as a glucosyl donor in cellular metabolic pathways. This chain is Probable UTP--glucose-1-phosphate uridylyltransferase, found in Schizosaccharomyces pombe (strain 972 / ATCC 24843) (Fission yeast).